A 65-amino-acid chain; its full sequence is Large ribosomal subunit protein bL35 (65 aa).

Positions 1–16 are enriched in basic residues; that stretch reads MPKMKTKSSAKKRFKV. The interval 1 to 26 is disordered; that stretch reads MPKMKTKSSAKKRFKVRSSGGIKRSQ.

The protein belongs to the bacterial ribosomal protein bL35 family.

In Azoarcus sp. (strain BH72), this protein is Large ribosomal subunit protein bL35.